The following is a 98-amino-acid chain: Small ribosomal subunit protein bS6 (98 aa).

The protein belongs to the bacterial ribosomal protein bS6 family.

Its function is as follows. Binds together with bS18 to 16S ribosomal RNA. The polypeptide is Small ribosomal subunit protein bS6 (Moorella thermoacetica (strain ATCC 39073 / JCM 9320)).